Consider the following 127-residue polypeptide: Glycine cleavage system H protein (127 aa).

The 82-residue stretch at 22 to 103 (EAYIGITDFA…AFANWIIKVE (82 aa)) folds into the Lipoyl-binding domain. Lysine 63 is subject to N6-lipoyllysine.

It belongs to the GcvH family. In terms of assembly, the glycine cleavage system is composed of four proteins: P, T, L and H. It depends on (R)-lipoate as a cofactor.

In terms of biological role, the glycine cleavage system catalyzes the degradation of glycine. The H protein shuttles the methylamine group of glycine from the P protein to the T protein. The polypeptide is Glycine cleavage system H protein (Alkaliphilus oremlandii (strain OhILAs) (Clostridium oremlandii (strain OhILAs))).